The sequence spans 308 residues: Protoheme IX farnesyltransferase (308 aa).

The next 8 helical transmembrane spans lie at 31–51 (VIEL…RGTV), 53–73 (PLLI…ANAL), 102–122 (NALV…WWTT), 124–144 (LLSG…YTLL), 149–169 (TSQN…IGWS), 170–190 (AVTG…FFWT), 240–260 (LALA…VWFL), and 288–308 (YLAV…PHLF).

Belongs to the UbiA prenyltransferase family. Protoheme IX farnesyltransferase subfamily.

It localises to the cell membrane. The catalysed reaction is heme b + (2E,6E)-farnesyl diphosphate + H2O = Fe(II)-heme o + diphosphate. The protein operates within porphyrin-containing compound metabolism; heme O biosynthesis; heme O from protoheme: step 1/1. Its function is as follows. Converts heme B (protoheme IX) to heme O by substitution of the vinyl group on carbon 2 of heme B porphyrin ring with a hydroxyethyl farnesyl side group. The polypeptide is Protoheme IX farnesyltransferase (Mycolicibacterium paratuberculosis (strain ATCC BAA-968 / K-10) (Mycobacterium paratuberculosis)).